The sequence spans 474 residues: Sugar transporter ERD6-like 17 (474 aa).

12 helical membrane-spanning segments follow: residues 27–47, 76–96, 106–126, 129–149, 159–180, 184–204, 266–286, 302–322, 329–349, 363–383, 403–423, and 429–449; these read ITAC…SFGV, FATL…MVIG, FLCI…LLNF, IISG…IAEI, TFSN…GNFI, TLAL…FFVP, TLVV…AAVI, IGTT…LILV, PLLM…GVAF, ILSF…LGGL, IVTL…NFLF, and GTFF…WLLV.

This sequence belongs to the major facilitator superfamily. Sugar transporter (TC 2.A.1.1) family. As to expression, expressed in young seedlings.

It is found in the membrane. Sugar transporter. This Arabidopsis thaliana (Mouse-ear cress) protein is Sugar transporter ERD6-like 17.